Reading from the N-terminus, the 152-residue chain is Small ribosomal subunit protein uS15 (152 aa).

The interval Met1–Ser20 is disordered.

This sequence belongs to the universal ribosomal protein uS15 family. Part of the 30S ribosomal subunit.

The protein is Small ribosomal subunit protein uS15 of Metallosphaera sedula (strain ATCC 51363 / DSM 5348 / JCM 9185 / NBRC 15509 / TH2).